The following is a 125-amino-acid chain: Histone H2A (125 aa).

A compositionally biased stretch (basic residues) spans 1–18 (MSGRGKGGKAKGKSKSRS). A disordered region spans residues 1–23 (MSGRGKGGKAKGKSKSRSSRAGL). N-acetylserine is present on Ser2. At Ser2 the chain carries Phosphoserine. Gln104 carries the post-translational modification N5-methylglutamine.

Belongs to the histone H2A family. The nucleosome is a histone octamer containing two molecules each of H2A, H2B, H3 and H4 assembled in one H3-H4 heterotetramer and two H2A-H2B heterodimers. The octamer wraps approximately 147 bp of DNA.

It localises to the nucleus. The protein resides in the chromosome. In terms of biological role, core component of nucleosome. Nucleosomes wrap and compact DNA into chromatin, limiting DNA accessibility to the cellular machineries which require DNA as a template. Histones thereby play a central role in transcription regulation, DNA repair, DNA replication and chromosomal stability. DNA accessibility is regulated via a complex set of post-translational modifications of histones, also called histone code, and nucleosome remodeling. The polypeptide is Histone H2A (Urechis caupo (Innkeeper worm)).